A 473-amino-acid chain; its full sequence is Azaphilone pigments biosynthesis cluster protein L (473 aa).

The signal sequence occupies residues 1–23 (MAELSIASGIVGLLSLGIQVTQS). ANK repeat units follow at residues 403–432 (EYGN…DVNA) and 436–465 (RYGN…NVST). N-linked (GlcNAc...) asparagine glycosylation is present at Asn462.

Its function is as follows. Part of the gene cluster that mediates the biosynthesis of azaphilone pigments (MonAzPs), a complex mixture of compounds with a common azaphilone skeleton very widely used as food colorants. Seems not to play a direct role in the biosynthesis but might have a regulatorx function. This chain is Azaphilone pigments biosynthesis cluster protein L, found in Monascus ruber (Mold).